The following is a 221-amino-acid chain: UPF0758 protein YicR (221 aa).

The 123-residue stretch at 99–221 folds into the MPN domain; sequence ALLSPEMTRE…YVSFAERGWI (123 aa). Zn(2+)-binding residues include His170, His172, and Asp183. The short motif at 170–183 is the JAMM motif element; that stretch reads HNHPSGCAEPSKAD.

Belongs to the UPF0758 family. YicR subfamily.

The protein is UPF0758 protein YicR of Salmonella newport (strain SL254).